We begin with the raw amino-acid sequence, 308 residues long: Aspartate carbamoyltransferase catalytic subunit (308 aa).

Residues R55 and T56 each contribute to the carbamoyl phosphate site. An L-aspartate-binding site is contributed by K83. Carbamoyl phosphate is bound by residues R105, H133, and Q136. L-aspartate contacts are provided by R166 and R220. Positions 261 and 262 each coordinate carbamoyl phosphate.

It belongs to the aspartate/ornithine carbamoyltransferase superfamily. ATCase family. As to quaternary structure, heterododecamer (2C3:3R2) of six catalytic PyrB chains organized as two trimers (C3), and six regulatory PyrI chains organized as three dimers (R2).

It carries out the reaction carbamoyl phosphate + L-aspartate = N-carbamoyl-L-aspartate + phosphate + H(+). The protein operates within pyrimidine metabolism; UMP biosynthesis via de novo pathway; (S)-dihydroorotate from bicarbonate: step 2/3. In terms of biological role, catalyzes the condensation of carbamoyl phosphate and aspartate to form carbamoyl aspartate and inorganic phosphate, the committed step in the de novo pyrimidine nucleotide biosynthesis pathway. In Chlorobaculum tepidum (strain ATCC 49652 / DSM 12025 / NBRC 103806 / TLS) (Chlorobium tepidum), this protein is Aspartate carbamoyltransferase catalytic subunit.